A 92-amino-acid polypeptide reads, in one-letter code: Small ribosomal subunit protein uS19c (92 aa).

This sequence belongs to the universal ribosomal protein uS19 family.

Its subcellular location is the plastid. The protein resides in the chloroplast. Its function is as follows. Protein S19 forms a complex with S13 that binds strongly to the 16S ribosomal RNA. The protein is Small ribosomal subunit protein uS19c of Fagopyrum esculentum subsp. ancestrale (Wild buckwheat).